The following is a 299-amino-acid chain: Glutamyl-Q tRNA(Asp) synthetase (299 aa).

L-glutamate-binding positions include 18–22 (RFAPS) and Glu-54. The 'HIGH' region signature appears at 21 to 31 (PSPSGALHFGS). Zn(2+)-binding residues include Cys-110, Cys-112, Tyr-124, and Cys-128. Residues Tyr-181 and Arg-199 each coordinate L-glutamate. A 'KMSKS' region motif is present at residues 237 to 241 (KLSKQ). Residue Lys-240 coordinates ATP.

Belongs to the class-I aminoacyl-tRNA synthetase family. GluQ subfamily. Requires Zn(2+) as cofactor.

Its function is as follows. Catalyzes the tRNA-independent activation of glutamate in presence of ATP and the subsequent transfer of glutamate onto a tRNA(Asp). Glutamate is transferred on the 2-amino-5-(4,5-dihydroxy-2-cyclopenten-1-yl) moiety of the queuosine in the wobble position of the QUC anticodon. This is Glutamyl-Q tRNA(Asp) synthetase from Shewanella oneidensis (strain ATCC 700550 / JCM 31522 / CIP 106686 / LMG 19005 / NCIMB 14063 / MR-1).